The chain runs to 330 residues: Phosphate acyltransferase (330 aa).

The protein belongs to the PlsX family. Homodimer. Probably interacts with PlsY.

It localises to the cytoplasm. The catalysed reaction is a fatty acyl-[ACP] + phosphate = an acyl phosphate + holo-[ACP]. Its pathway is lipid metabolism; phospholipid metabolism. Its function is as follows. Catalyzes the reversible formation of acyl-phosphate (acyl-PO(4)) from acyl-[acyl-carrier-protein] (acyl-ACP). This enzyme utilizes acyl-ACP as fatty acyl donor, but not acyl-CoA. The protein is Phosphate acyltransferase of Streptococcus pneumoniae (strain 70585).